The sequence spans 476 residues: Adenosylhomocysteinase (476 aa).

Substrate is bound by residues Thr67, Asp142, and Glu202. An NAD(+)-binding site is contributed by 203-205; sequence TTT. Lys232 and Asp236 together coordinate substrate. Residues Asn237, 266-271, Glu289, Asn324, 345-347, and Asn390 each bind NAD(+); these read GYGDVG and IGH.

This sequence belongs to the adenosylhomocysteinase family. It depends on NAD(+) as a cofactor.

Its subcellular location is the cytoplasm. The enzyme catalyses S-adenosyl-L-homocysteine + H2O = L-homocysteine + adenosine. It functions in the pathway amino-acid biosynthesis; L-homocysteine biosynthesis; L-homocysteine from S-adenosyl-L-homocysteine: step 1/1. May play a key role in the regulation of the intracellular concentration of adenosylhomocysteine. The sequence is that of Adenosylhomocysteinase from Synechococcus sp. (strain CC9605).